Reading from the N-terminus, the 377-residue chain is Glutamate 5-kinase (377 aa).

Lysine 18 is an ATP binding site. Residues serine 55, aspartate 142, and asparagine 154 each coordinate substrate. ATP-binding positions include 174–175 (SD) and 216–222 (TGGMKSK). The region spanning 281 to 359 (QGEVVVDAGA…REIEALLGYK (79 aa)) is the PUA domain.

The protein belongs to the glutamate 5-kinase family.

It is found in the cytoplasm. It carries out the reaction L-glutamate + ATP = L-glutamyl 5-phosphate + ADP. The protein operates within amino-acid biosynthesis; L-proline biosynthesis; L-glutamate 5-semialdehyde from L-glutamate: step 1/2. Its function is as follows. Catalyzes the transfer of a phosphate group to glutamate to form L-glutamate 5-phosphate. The sequence is that of Glutamate 5-kinase from Meiothermus ruber.